The primary structure comprises 333 residues: Transcription factor MYB36 (333 aa).

HTH myb-type domains are found at residues K9 to L62 and R63 to L117. DNA-binding regions (H-T-H motif) lie at residues W38–L62 and W90–L113. Residues G119–L150 form a disordered region. A compositionally biased stretch (polar residues) spans K122 to E135. Residues N136–L150 show a composition bias toward low complexity.

Expressed in leaves, roots (endodermis-specific) and seedlings.

The protein resides in the nucleus. Functionally, transcription factors that activates genes required for endodermal differentiation but represses genes involved in proliferative divisions, thus regulating the transition from proliferation to differentiation in root endodermis. Required for Casparian strip formation by positively regulating the expression of the Casparian strip genes CASP1, PER64 and ESB1 and other endodermis-specific genes, thus triggering correct localized lignin biosynthesis in root endodermis and subsequently regulating global ion homeostasis. The polypeptide is Transcription factor MYB36 (Arabidopsis thaliana (Mouse-ear cress)).